The primary structure comprises 531 residues: Pescadillo homolog (531 aa).

The BRCT domain occupies 309–398 (SIKTMFKGCV…RKLPTERYMP (90 aa)).

The protein belongs to the pescadillo family.

It is found in the nucleus. It localises to the nucleolus. The protein localises to the nucleoplasm. Required for maturation of ribosomal RNAs and formation of the large ribosomal subunit. The polypeptide is Pescadillo homolog (Caenorhabditis elegans).